We begin with the raw amino-acid sequence, 489 residues long: Cytochrome P450 monooxygenase bfoB (489 aa).

Positions 1-18 (MLALYLIAGLLVGLLVYR) are cleaved as a signal peptide. 3 N-linked (GlcNAc...) asparagine glycosylation sites follow: Asn113, Asn348, and Asn386. Position 429 (Cys429) interacts with heme.

The protein belongs to the cytochrome P450 family. Heme serves as cofactor.

It carries out the reaction 2 fonsecin B + NADPH + O2 + H(+) = bifonsecin B + NADP(+) + 2 H2O. It catalyses the reaction 2 rubrofusarin B + NADPH + O2 + 3 H(+) = nigerone + NADP(+) + 2 H2O. The protein operates within secondary metabolite biosynthesis. In terms of biological role, cytochrome P450 monooxygenase; part of the gene cluster that mediates the biosynthesis of bifonsecin B, a dimeric gamma-naphthopyrone. The first step in the biosynthesis of bifonsecin B is the production of gamma-naphthopyrone precursor YWA1 by the non-reducing polyketide synthase albA, via condensation of one acetyl-CoA starter unit with 6 malonyl-CoA units. YWA1 is then methylated by bfoE at position C-6 to yield foncesin which is further methylated at position C-8 by bfoD to produce fonsecin B. A key enzyme in the biosynthetic pathway is the cytochrome P450 monooxygenase bfoB which catalyzes the oxidative dimerization of fonsecin B to bifonsecin B. Bfob also catalyzes the oxidative dimerization of rubrofusarin B into nigerone. The stereoselectivity of bfoB is influenced by the two natural monomeric substrates; homodimerization of fonsecin B yields a stereochemically pure biaryl, M-foncerine B, while rubrofusarin B yields a mixture of enantiomers M- and P-nigerone. The polypeptide is Cytochrome P450 monooxygenase bfoB (Aspergillus brasiliensis (strain CBS 101740 / IMI 381727 / IBT 21946)).